The chain runs to 607 residues: Glutamine--fructose-6-phosphate aminotransferase [isomerizing] (607 aa).

Cysteine 2 functions as the Nucleophile; for GATase activity in the catalytic mechanism. In terms of domain architecture, Glutamine amidotransferase type-2 spans 2-217 (CGIVGIVGHS…DGDWAVVRRD (216 aa)). SIS domains are found at residues 283–422 (LPFD…ARGV) and 455–597 (IARE…VDQP). The For Fru-6P isomerization activity role is filled by lysine 602.

In terms of assembly, homodimer.

Its subcellular location is the cytoplasm. The catalysed reaction is D-fructose 6-phosphate + L-glutamine = D-glucosamine 6-phosphate + L-glutamate. Its function is as follows. Catalyzes the first step in hexosamine metabolism, converting fructose-6P into glucosamine-6P using glutamine as a nitrogen source. The chain is Glutamine--fructose-6-phosphate aminotransferase [isomerizing] from Mesorhizobium japonicum (strain LMG 29417 / CECT 9101 / MAFF 303099) (Mesorhizobium loti (strain MAFF 303099)).